The following is a 363-amino-acid chain: Ribosomal RNA large subunit methyltransferase M (363 aa).

Residues S190, 223 to 226 (CPGG), D242, D262, and D279 each bind S-adenosyl-L-methionine. Residue K308 is the Proton acceptor of the active site.

It belongs to the class I-like SAM-binding methyltransferase superfamily. RNA methyltransferase RlmE family. RlmM subfamily. In terms of assembly, monomer.

It localises to the cytoplasm. The enzyme catalyses cytidine(2498) in 23S rRNA + S-adenosyl-L-methionine = 2'-O-methylcytidine(2498) in 23S rRNA + S-adenosyl-L-homocysteine + H(+). Catalyzes the 2'-O-methylation at nucleotide C2498 in 23S rRNA. The chain is Ribosomal RNA large subunit methyltransferase M from Vibrio vulnificus (strain CMCP6).